The sequence spans 219 residues: MSRVKTTVVRKAGGQVWEDPTLLEWDPNHFRLFVGNLGNDVNDESLYQAFSEYPSLVKTKVVRDREGKTRGFGFVSFKDSDQFLKAWREKNGKYIGSRPVKLSRATSDVKPNEVNEKTIDSKIRNSLYSRTIHHGNRVQKKIKNKHGKNSSKSSRAAQSAAAELISSSSITGARPANSTSVPNAVNTEISAARATESEASRNQTKASRDYSRASSFRRV.

The region spanning 30–107 (FRLFVGNLGN…RPVKLSRATS (78 aa)) is the RRM domain. Over residues 140 to 149 (KKIKNKHGKN) the composition is skewed to basic residues. Residues 140–219 (KKIKNKHGKN…YSRASSFRRV (80 aa)) form a disordered region. Residues 150–169 (SSKSSRAAQSAAAELISSSS) show a composition bias toward low complexity. Residues 176–186 (ANSTSVPNAVN) show a composition bias toward polar residues.

This is an uncharacterized protein from Schizosaccharomyces pombe (strain 972 / ATCC 24843) (Fission yeast).